The primary structure comprises 347 residues: Protein RecA (347 aa).

An ATP-binding site is contributed by 67 to 74 (GPESSGKT).

It belongs to the RecA family.

The protein resides in the cytoplasm. Can catalyze the hydrolysis of ATP in the presence of single-stranded DNA, the ATP-dependent uptake of single-stranded DNA by duplex DNA, and the ATP-dependent hybridization of homologous single-stranded DNAs. It interacts with LexA causing its activation and leading to its autocatalytic cleavage. The protein is Protein RecA of Paenarthrobacter aurescens (strain TC1).